The following is a 444-amino-acid chain: UDP-N-acetylmuramate--L-alanine ligase (444 aa).

110–116 is a binding site for ATP; sequence GAHGKTS.

It belongs to the MurCDEF family.

The protein localises to the cytoplasm. The enzyme catalyses UDP-N-acetyl-alpha-D-muramate + L-alanine + ATP = UDP-N-acetyl-alpha-D-muramoyl-L-alanine + ADP + phosphate + H(+). It functions in the pathway cell wall biogenesis; peptidoglycan biosynthesis. Its function is as follows. Cell wall formation. This Streptococcus pneumoniae (strain CGSP14) protein is UDP-N-acetylmuramate--L-alanine ligase.